We begin with the raw amino-acid sequence, 298 residues long: N-acetylmuramic acid 6-phosphate etherase 2 (298 aa).

An SIS domain is found at 51–214 (IVSRFEQGGR…STAAMVRLGR (164 aa)). The active-site Proton donor is Glu-79. Glu-110 is a catalytic residue.

Belongs to the GCKR-like family. MurNAc-6-P etherase subfamily. As to quaternary structure, homodimer.

The catalysed reaction is N-acetyl-D-muramate 6-phosphate + H2O = N-acetyl-D-glucosamine 6-phosphate + (R)-lactate. It functions in the pathway amino-sugar metabolism; N-acetylmuramate degradation. In terms of biological role, specifically catalyzes the cleavage of the D-lactyl ether substituent of MurNAc 6-phosphate, producing GlcNAc 6-phosphate and D-lactate. This Bacillus licheniformis (strain ATCC 14580 / DSM 13 / JCM 2505 / CCUG 7422 / NBRC 12200 / NCIMB 9375 / NCTC 10341 / NRRL NRS-1264 / Gibson 46) protein is N-acetylmuramic acid 6-phosphate etherase 2.